The chain runs to 314 residues: NAD-dependent protein lipoamidase sirtuin-4, mitochondrial (314 aa).

A mitochondrion-targeting transit peptide spans 1–28 (MKMSFALTFRSAKGRWIANPSQPCSKAS). One can recognise a Deacetylase sirtuin-type domain in the interval 37-314 (PPLDPEKVKE…GELLPLIDPC (278 aa)). Residues 62–82 (GAGI…VGLY) and 143–146 (QNVD) contribute to the NAD(+) site. The active-site Proton acceptor is the histidine 161. Residues cysteine 169, cysteine 172, cysteine 220, and cysteine 223 each contribute to the Zn(2+) site. Residues 260–262 (GSS), 286–288 (NIG), and cysteine 304 each bind NAD(+).

Belongs to the sirtuin family. Class II subfamily. Interacts with GLUD1, IDE and SLC25A5. Interacts with DLAT and PDHX. Interacts with MCCC1 (via the biotin carboxylation domain). Interacts with PCCA and PC. Requires Zn(2+) as cofactor. As to expression, detected in vascular smooth muscle and striated muscle. Detected in insulin-producing beta-cells in pancreas islets of Langerhans (at protein level). Widely expressed. Weakly expressed in leukocytes and fetal thymus.

Its subcellular location is the mitochondrion matrix. The enzyme catalyses N(6)-[(R)-lipoyl]-L-lysyl-[protein] + NAD(+) + H2O = 2''-O-lipoyl-ADP-D-ribose + nicotinamide + L-lysyl-[protein]. It carries out the reaction N(6)-biotinyl-L-lysyl-[protein] + NAD(+) + H2O = 2''-O-biotinyl-ADP-D-ribose + nicotinamide + L-lysyl-[protein]. The catalysed reaction is N(6)-acetyl-L-lysyl-[protein] + NAD(+) + H2O = 2''-O-acetyl-ADP-D-ribose + nicotinamide + L-lysyl-[protein]. It catalyses the reaction L-cysteinyl-[protein] + NAD(+) = S-(ADP-D-ribosyl)-L-cysteinyl-[protein] + nicotinamide + H(+). Functionally, acts as a NAD-dependent protein lipoamidase, biotinylase, deacetylase and ADP-ribosyl transferase. Catalyzes more efficiently removal of lipoyl- and biotinyl- than acetyl-lysine modifications. Inhibits the pyruvate dehydrogenase complex (PDH) activity via the enzymatic hydrolysis of the lipoamide cofactor from the E2 component, DLAT, in a phosphorylation-independent manner. Catalyzes the transfer of ADP-ribosyl groups onto target proteins, including mitochondrial GLUD1, inhibiting GLUD1 enzyme activity. Acts as a negative regulator of mitochondrial glutamine metabolism by mediating mono ADP-ribosylation of GLUD1: expressed in response to DNA damage and negatively regulates anaplerosis by inhibiting GLUD1, leading to block metabolism of glutamine into tricarboxylic acid cycle and promoting cell cycle arrest. In response to mTORC1 signal, SIRT4 expression is repressed, promoting anaplerosis and cell proliferation. Acts as a tumor suppressor. Also acts as a NAD-dependent protein deacetylase: mediates deacetylation of 'Lys-471' of MLYCD, inhibiting its activity, thereby acting as a regulator of lipid homeostasis. Does not seem to deacetylate PC. Controls fatty acid oxidation by inhibiting PPARA transcriptional activation. Impairs SIRT1-PPARA interaction probably through the regulation of NAD(+) levels. Down-regulates insulin secretion. The polypeptide is NAD-dependent protein lipoamidase sirtuin-4, mitochondrial (Homo sapiens (Human)).